Consider the following 654-residue polypeptide: Import motor subunit, mitochondrial (654 aa).

Residues 1–23 constitute a mitochondrion transit peptide; that stretch reads MLAAKNILNRSSLSSSFRIATRL. T330 is subject to Phosphothreonine. Residues 629–654 are disordered; sequence EQLYKNDSNNNNNNNGNNAESGETKQ. Low complexity predominate over residues 637 to 646; sequence NNNNNNNGNN.

Belongs to the heat shock protein 70 family. In terms of assembly, component of the PAM complex, at least composed of SSC1 (mtHsp70), MGE1, TIM44, PAM16/TIM16, PAM17 and PAM18/TIM14. In the complex, SSC1 interacts directly with PAM18 and TIM44. Interacts with NAP1.

The protein localises to the mitochondrion matrix. It carries out the reaction ATP + H2O = ADP + phosphate + H(+). Essential component of the PAM complex, a complex required for the translocation of transit peptide-containing proteins from the inner membrane into the mitochondrial matrix in an ATP-dependent manner. Constitutes the ATP-driven core of the motor and binds the precursor preprotein. Required for the import of the processed frataxin homolog YFH1 into the mitochondrion. This Saccharomyces cerevisiae (strain ATCC 204508 / S288c) (Baker's yeast) protein is Import motor subunit, mitochondrial.